Here is a 163-residue protein sequence, read N- to C-terminus: MKSVITTTISARDAAGRFPSRSDLESVQGNIQRSAARLEAAEKISAGHEGVVKEAGDACFAKYTYLKTSGEAGDSQDKVNKCYRDIDHYMRLINYSLVVGGTGPLDEWGIAGAREVYRALNLPASAYIAAFAYTRDRVCVPRDMSAQAAVEFIGALDYVNSLS.

The (2R,3E)-phycoerythrobilin site is built by C82 and C139.

It belongs to the phycobiliprotein family. Heterodimer of an alpha and a beta chain. Post-translationally, contains two covalently linked bilin chromophores.

The protein localises to the plastid. Its subcellular location is the chloroplast thylakoid membrane. Functionally, light-harvesting photosynthetic bile pigment-protein from the phycobiliprotein complex. The sequence is that of R-phycoerythrin alpha chain (cpeA) from Aglaothamnion neglectum (Red alga).